The following is a 207-amino-acid chain: Serotonin N-acetyltransferase (207 aa).

Residues 1–29 are disordered; that stretch reads MSTPSVHCLKPSPLHLPSGIPGSPGRQRR. The YWHAZ-binding stretch occupies residues 28-35; the sequence is RRHTLPAN. At T31 the chain carries Phosphothreonine; by PKA. The region spanning 35 to 196 is the N-acetyltransferase domain; that stretch reads NEFRCLTPED…TFTEMHCSLR (162 aa). L124 is a substrate binding site. Residues 124 to 126 and 132 to 137 contribute to the acetyl-CoA site; these read LAV and QQGKGS. M159 serves as a coordination point for substrate. Residue 168–170 coordinates acetyl-CoA; the sequence is YQR. At S205 the chain carries Phosphoserine; by PKA.

Belongs to the acetyltransferase family. AANAT subfamily. Monomer. Interacts with several 14-3-3 proteins, including YWHAB, YWHAE, YWHAG and YWHAZ, preferentially when phosphorylated at Thr-31. Phosphorylation on Ser-205 also allows binding to YWHAZ, but with a 10-fold lower affinity. The interaction with YWHAZ considerably increases affinity for arylalkylamines and acetyl-CoA and protects the enzyme from dephosphorylation and proteasomal degradation. It may also prevent thiol-dependent inactivation. The physiological stoichiometry of the interaction is not clear. In vitro studies show either 1:2 (i.e. 1 AANAT molecule per YWHAZ dimer) or 2:2. In terms of processing, cAMP-dependent phosphorylation on both N-terminal Thr-31 and C-terminal Ser-205 regulates AANAT activity by promoting interaction with 14-3-3 proteins. In terms of tissue distribution, highest expression in the pineal gland, followed by retina. Expressed at much lower levels in brainstem and pituitary gland. AANAT activity also detected at low levels in the olfactory lobe.

It localises to the cytoplasm. It carries out the reaction a 2-arylethylamine + acetyl-CoA = an N-acetyl-2-arylethylamine + CoA + H(+). It participates in aromatic compound metabolism; melatonin biosynthesis; melatonin from serotonin: step 1/2. Controls the night/day rhythm of melatonin production in the pineal gland. Catalyzes the N-acetylation of serotonin into N-acetylserotonin, the penultimate step in the synthesis of melatonin. This chain is Serotonin N-acetyltransferase (AANAT), found in Ovis aries (Sheep).